Here is a 420-residue protein sequence, read N- to C-terminus: Ribosome biogenesis protein WDR12 homolog (420 aa).

A ubiquitin-like (UBL) domain region spans residues 10–92 (VQVHLKTKQE…EDAIEIEYVE (83 aa)). 7 WD repeats span residues 104–142 (LHDD…LTIS), 143–185 (GHTA…NAVD), 192–231 (GHER…GVEG), 250–288 (GHRE…IKTE), 290–329 (STNK…GSVV), 335–375 (GHNA…APLY), and 379–417 (GHGD…AEDT).

The protein belongs to the WD repeat WDR12/YTM1 family.

The protein localises to the nucleus. It is found in the nucleolus. It localises to the nucleoplasm. Functionally, required for maturation of ribosomal RNAs and formation of the large ribosomal subunit. The sequence is that of Ribosome biogenesis protein WDR12 homolog from Drosophila sechellia (Fruit fly).